A 609-amino-acid chain; its full sequence is UvrABC system protein C (609 aa).

In terms of domain architecture, GIY-YIG spans 19–97 (ISPGCYLWKS…IKKHNPRFNV (79 aa)). Positions 208-243 (ESLVGDLSIKMSASSNRMDFEKAARYRDMLQRIQNF) constitute a UVR domain.

This sequence belongs to the UvrC family. Interacts with UvrB in an incision complex.

The protein resides in the cytoplasm. Functionally, the UvrABC repair system catalyzes the recognition and processing of DNA lesions. UvrC both incises the 5' and 3' sides of the lesion. The N-terminal half is responsible for the 3' incision and the C-terminal half is responsible for the 5' incision. This Leptospira borgpetersenii serovar Hardjo-bovis (strain JB197) protein is UvrABC system protein C.